The primary structure comprises 101 residues: Small ribosomal subunit protein uS14 (101 aa).

It belongs to the universal ribosomal protein uS14 family. As to quaternary structure, part of the 30S ribosomal subunit. Contacts proteins S3 and S10.

Functionally, binds 16S rRNA, required for the assembly of 30S particles and may also be responsible for determining the conformation of the 16S rRNA at the A site. This chain is Small ribosomal subunit protein uS14, found in Paramagnetospirillum magneticum (strain ATCC 700264 / AMB-1) (Magnetospirillum magneticum).